Reading from the N-terminus, the 128-residue chain is Large ribosomal subunit protein uL22 (128 aa).

The protein belongs to the universal ribosomal protein uL22 family. In terms of assembly, part of the 50S ribosomal subunit.

This protein binds specifically to 23S rRNA; its binding is stimulated by other ribosomal proteins, e.g. L4, L17, and L20. It is important during the early stages of 50S assembly. It makes multiple contacts with different domains of the 23S rRNA in the assembled 50S subunit and ribosome. Functionally, the globular domain of the protein is located near the polypeptide exit tunnel on the outside of the subunit, while an extended beta-hairpin is found that lines the wall of the exit tunnel in the center of the 70S ribosome. This chain is Large ribosomal subunit protein uL22, found in Prochlorococcus marinus (strain MIT 9301).